The chain runs to 3916 residues: MAGNQYLPKEPIAIIGTSCRFPGGANTPSKLWDLLCEKRDVQSRIPNDRFNVDAFYSTNGDKNGCTDVKNAYVLSEDIRVFDASFFKINPREAEAMDPQQRLLLEAVYEATEAAGLPMEDLKGSDTAVYVGCMTGDYHEMLMRDPQDMPKYMATGTARSILSNRISYLFDWKGPSMTIDTACSSSLVAVYDAVTALRNGVSKIACAGGANLILGPEMMISESKLHMLSPTGRSRMWDASANGYARGEGVAAIMMKTLSQALADGDHIQGVIREIGVNSDGRTNGITLPSPEAQKVLIRQTYKKAGLDFFKDRCQFFEAHGTGTPAGDPLEARAIHEAFFTDGDTVPEPMYVGSVKTAIGHLEGCAGLAGLIKALEAVKRGIIPPNQLFENLNPALKPYVSNLRLPTESKPWPKLTPGSPRRASVNSFGFGGTNVHAIIEQFDNVHTQTSSSDGIISTPLVLSANSDLSLRKQIAHFAEAIEHNDKGKIDRVIFTLTQRRSQLPLRTYFSGYDLQSLQQKLRDATAENAVLPFISQTVPPGRPPRILGVFTGQGAQWPTMGREILKASPFARAVIASLEESLASLAQPPAWTLTEQIMADKESSRLSEAAISQPLCTAVQIMVVELLRKAGITFNCVIGHSSGEITAAYTAGFLSASDAIRVAYLRGVCAKLAGGENGETGSMIAVGLSYEEASAFCEENFAGLVDVAASNAPTSTTLSGDKASIDDAKALLDAQGTFARILKVDTAYHSHHMNPCAQPYLDKLQAARVKSLPGDESVEWYSSVLGERITASLHGEALCDEYWVENMVNPVLFSVASELVAEASLPCHVALEVGPHPALKGPFNQTYKRATGSPLPYQGTVARNIHDVEGLSDSLGFLWSHLGKSAVDFTAYSQAFSPSITAMADGLPPYAWDHTQSFWRESRKSLNYRQRTQPPHPLLGARSVEDTADSMRWINYLRLDDVPWLEGHKVEGQVVYPAAGYLVMAMEAARAIDTTKGIQLIELSDVYILSAIQLTEGSQALETVFTLQVERNEPTFSTASWTLSTPMSGRNDSWKCNAKGQLRVEFGCSDDAARLPSRNKPIASLTSVNMERFYSALANIGLEYTGEFKQLKSIDRQLGLATAHVSQVVPDFPAMIHPALLDGAFQSIFAAYCWPDDGSLQAPFVPTFFRSLRIANTGHLRHGEDLVVDSFLTNTNERELTADMDVFQSSQGQPVLQLQGLTCTSLLRPGPSNAKELYTKTEWEVDIASGIAQSDTQDQDTASDLELVDLCERLSYFYLRELNNAVGREEVSGFDWHYRRIFEWIDHLFPLIQSGQHATIKTEWSSDSRDWLMQQSARFPGRIDLQLIQAVGENLPSVVRKQTTMLEHMVKDDMLNRIYKFGLGFERANVYLGRISKQIAHRYPRMNILEIGAGTGGATKGIMESLGTTFETYTFTDISTGFFEAAAEAFDHWADKMIFKPLNIESDPTEQGFPEGHYDFIIASNVLHATKSLTVTMRNTRKLLKPGGQLLLLEVTSDIVRVKLMMSGLSGWWLGGDDGRRYGPTIPVSQWDALLKQTGFSGVDKTVNDFVDAEKYMTSVMLSQAVDDRIELLRQPRLTFSDWLSSQSITVVGGYFRDIGRDILEILHQMNHGASQPVIHHVGSFEELALSNIQARSALVLEDLDEPILKDLTDDKLRGVQRLINESRQVLWVSKGCQRDEPFANMSIGMCRSLASEYPHIHLQHVDIEGRVSPMTASLLVEAFLRLVYRASLKSDDLVWSIEAELVLREDKWFIPRVKSDEALNNQLNASKMTIHSQKTLHGDTIEIQQRSNQFVIVDPVPCVPVSVSSPPVAITVTHSLLFPFQVGTKSSGYLCYGYTDSQPRTRVLAISEVNRSKVSVSPFSVWDLSSSEIDAADLLRKTALAITADRLLSDFEAGATVLIHESDELLGAALQWKAAELDLNVIMTTSESSRERSTGAMFIHALAPERLVNHIMPQHTKAVIDLSGKDYSIVGSPLRRCLPANCKFHQLQDILGNASQGVADPIIHGVRDASRSSLQLCGDGPVVKLSDLPSLRASIKDYATVVEFSANTTIPAIVQPLEGSRLFRSDRTYLLIGCTGGLGKALCRWMVSCGVRHLALTTRNVAAIDQVWLEELRIQGAQVNLYQADVSDKAALLQAYDQIVKEMPPICGTANAALLLSDRTFTELKVNDFTKVFGPKVKGTQNLHELLLDQKLDFFIMFSSLASVVGNRGQANYAASNLFMSAIAEQRRAKGLAASVMHIGMVLGVGYVSSTGAYEATLRSSNYMAISETDLLNMFSQAILVGQPNSTHAPELITGLNRFSLEPEAQKYFWRDNMRFCHHTLEEEHQERASATKVSISQRLSEAKGTAEILAVVEEEFCTKLERLLQAEAGFVKTSQSLLGLGVDSLVAAEIRSWFLKELEVDTPVLEILNTASITELCSTVVSHLPTISGEIAPKTEVTKQAIKTLNVVETSTAVSSALPTENEPFTIRNSPNSTQVTSEAGVDEDTSIHSKFDRAGPLSFAQERLWFLQQFLRDHSTYNVTMHYHISGPLRLHDLEMAFQQLIHRHESLRTSFFIDPDTDLPTQAVLKDSSFKLEQKHNSTAKIEYKAMQEMSYDLENGKVTKAVILPDSDGEFDLIFGFHHIALDGYSAQIMVRDLAIAYAGQTLPSKQQDYLDFAIAQKTAKVPDTTLAYWRSEFRELPPTLSVFDFAETKTRTPLTDYTTRALERTISIDQGRSIKAVAKCLDATPFHIHLAALQVVLSDLASTKDLCIGITDANKYDVTHIDTVGFFVNLLPLRLKISLSQTLAEVVANAKSKANSALSHSDIPFDVLLDEVKLPRSTTHSPLFQVILNYKMGSTQKVPLADCQAQLVAFKDASNPYDLTFDIETYHDGSACISVKTQEYLYSESELSFILDSYLQTLALFASEPSRTIDQICRPTAEQIDKALTLGRGERIPSPRLETLCHYFEEFVVKQPDDTALVTDKGQALTWCQLKALVNQIAMTFVEAGAKQDSRVGVYCEPSMYILPTLLAIAEVGGVYVPLDAQNPIKRLQLMVDDCQPDVILIDDSTATTARELETNAIVINVNTIKADPSNTFHMDIRARGNGMGYIFYTSGTTGVPKAVALTHTSLVHHFDGFIHYNNLSKCRMLQQAPLGFDMSLTQMTLAIMLGGTLIVASSETRKDPMQLAQLMLAEKVTHTFMTPTLALSVIHHGYEYLRQCVNWEHASLAGEAMTTRVTREFKRLGLRNLELLNGYGPTEITIIATCGSNELGDTLRDTHNPSIGRALPNYSCYILDENMQPVRPGLAGELVIGGAGVAIGYLNRQDLTEVKFLRDPFSPAEDIARGWTRMYRTGDKARFLSDGRLCFLGRIAGDSQIKLRGFRIELEDIASTIVRASDGKIPEAAVSLRGEGDSAYLVAFVILSQFNSPSDENGYLKQLLEELSLPRYMKPARIISIDQLPMNASGKLDQYALDALPVPHEEDIVDKPLTETQERLKLGWLKALPFIDAAIGPDTDFFSAGGNSLRIVSLREYITREFGVTVSVFDLFQASTLGEMAAKIDGSTTQGPTTMPIDWNEETRIDADLSIVGAQEPLPSETANDLQVALTGATGFLGVSILKTLLEDKRVSKVHCLAVRSSSNTSDPVFSSSRVACYPGDLSLPRLGLSQEQFDQLAKTVERIIHNGADVSFLKTYQSLKRSNVSSSRELARMAITRRIPVHFVSTGGVVQLTGQDGLDEVSVADSVPPTDGSLGYVASKWASEVILEKYASQYNLPVWIHRPSNITGPNAPKADLMQNIFHYSVKTASLPDLASWSGCFDFVPVDVVAAGIAGSIYETQDTVAYKHHCGREKISVEDLPSYLEAKHGKIETISVEEWLERSKAAGFDEVTAALVEKTLSRGGIVPWLRKEAN.

The region spanning Lys-9–Gln-440 is the Ketosynthase family 3 (KS3) domain. Catalysis depends on for beta-ketoacyl synthase activity residues Cys-182, His-319, and His-360. Positions Val-548–Asp-866 are malonyl-CoA:ACP transacylase (MAT) domain. An N-terminal hotdog fold region spans residues His-935 to Ser-1068. Positions His-935 to Pro-1228 are dehydratase (DH) domain. The PKS/mFAS DH domain maps to His-935–Ser-1231. The active-site Proton acceptor; for dehydratase activity is the His-967. The segment at Leu-1084–Ser-1231 is C-terminal hotdog fold. Catalysis depends on Asp-1141, which acts as the Proton donor; for dehydratase activity. Residues Ile-1347–Tyr-1575 are C-methyltransferase (CMeT) domain. Residues Thr-2092–Val-2266 are ketoreductase (KR) domain 1. In terms of domain architecture, Carrier 1 spans Glu-2372–Leu-2449. Ser-2409 is modified (O-(pantetheine 4'-phosphoryl)serine). The segment at Asn-2487–Asp-2510 is disordered. A compositionally biased stretch (polar residues) spans Ile-2492–Ser-2503. Residues Pro-2522 to Ile-2806 are condensation. The tract at residues Glu-2975 to Leu-3385 is adenylation. The region spanning Lys-3493 to Thr-3570 is the Carrier 2 domain. Ser-3530 is modified (O-(pantetheine 4'-phosphoryl)serine). A thiolester reductase (R) domain region spans residues Leu-3612 to Ala-3833.

This sequence in the C-terminal section; belongs to the NRP synthetase family.

It participates in mycotoxin biosynthesis. Its function is as follows. Fusarin C synthetase; part of the gene cluster that mediates the biosynthesis of the mycotoxin fusarin C. Within the cluster, FUS1, FUS2, FUS8 and FUS9 are sufficient for fusarin production. The roles of the other FUS members are yet undetermined. The fusarin C synthetase FUS1 is responsible for the condensation of one acetyl-coenzyme A (CoA) unit with six malonyl-CoA units and the amide linkage of the arising heptaketide and homoserine, subsequently releasing the first intermediate, prefusarin, as an alcohol with an open ring structure. The cytochrome P450 monooxygenase FUS8 participates in multiple oxidation processes at carbon C-20 and is able to use the FUS1 product as substrate, resulting in formation of 20-hydroxy-prefusarin. This reaction seems to be essential before the 2-pyrrolidone ring closure can be catalyzed by FUS2, generating 20-hydroxy-fusarin. FUS8 is able to further oxidizes carbon C-20 after ring closure, resulting in the formation of carboxy-fusarin C. As the last step, FUS9 methylates the hydroxyl group at C-21 to generate fusarin C. Fusarin C can then rearrange to epi-fusarin C, the (z)-isomers, and fusarin A and fusarin D. This is Fusarin C synthetase from Gibberella fujikuroi (strain CBS 195.34 / IMI 58289 / NRRL A-6831) (Bakanae and foot rot disease fungus).